The chain runs to 177 residues: ATP synthase subunit delta (177 aa).

It belongs to the ATPase delta chain family. In terms of assembly, F-type ATPases have 2 components, F(1) - the catalytic core - and F(0) - the membrane proton channel. F(1) has five subunits: alpha(3), beta(3), gamma(1), delta(1), epsilon(1). F(0) has three main subunits: a(1), b(2) and c(10-14). The alpha and beta chains form an alternating ring which encloses part of the gamma chain. F(1) is attached to F(0) by a central stalk formed by the gamma and epsilon chains, while a peripheral stalk is formed by the delta and b chains.

It localises to the cell inner membrane. In terms of biological role, f(1)F(0) ATP synthase produces ATP from ADP in the presence of a proton or sodium gradient. F-type ATPases consist of two structural domains, F(1) containing the extramembraneous catalytic core and F(0) containing the membrane proton channel, linked together by a central stalk and a peripheral stalk. During catalysis, ATP synthesis in the catalytic domain of F(1) is coupled via a rotary mechanism of the central stalk subunits to proton translocation. Its function is as follows. This protein is part of the stalk that links CF(0) to CF(1). It either transmits conformational changes from CF(0) to CF(1) or is implicated in proton conduction. The protein is ATP synthase subunit delta of Shewanella sp. (strain ANA-3).